A 131-amino-acid chain; its full sequence is Small ribosomal subunit protein uS8 (131 aa).

This sequence belongs to the universal ribosomal protein uS8 family. Part of the 30S ribosomal subunit. Contacts proteins S5 and S12.

Functionally, one of the primary rRNA binding proteins, it binds directly to 16S rRNA central domain where it helps coordinate assembly of the platform of the 30S subunit. The protein is Small ribosomal subunit protein uS8 of Albidiferax ferrireducens (strain ATCC BAA-621 / DSM 15236 / T118) (Rhodoferax ferrireducens).